The sequence spans 415 residues: Multidrug resistance protein MdtA (415 aa).

Positions 1-21 are cleaved as a signal peptide; it reads MKGSYKSRWVIVIVVVIAAIA. Disordered stretches follow at residues 32-59 and 392-415; these read SRSA…SGPL and EAQS…GARS. Residues 399-415 are compositionally biased toward basic and acidic residues; it reads SEEKATSREYAKKGARS.

It belongs to the membrane fusion protein (MFP) (TC 8.A.1) family. In terms of assembly, part of a tripartite efflux system composed of MdtA, MdtB and MdtC.

The protein resides in the cell inner membrane. Functionally, the MdtABC tripartite complex confers resistance against novobiocin and deoxycholate. The polypeptide is Multidrug resistance protein MdtA (Escherichia coli (strain SMS-3-5 / SECEC)).